The chain runs to 227 residues: Ribose-5-phosphate isomerase A (227 aa).

Substrate-binding positions include Thr-26–Thr-29, Asp-82–Asp-85, and Lys-95–Gly-98. The Proton acceptor role is filled by Glu-104. Position 122 (Lys-122) interacts with substrate.

It belongs to the ribose 5-phosphate isomerase family. As to quaternary structure, homodimer.

It catalyses the reaction aldehydo-D-ribose 5-phosphate = D-ribulose 5-phosphate. Its pathway is carbohydrate degradation; pentose phosphate pathway; D-ribose 5-phosphate from D-ribulose 5-phosphate (non-oxidative stage): step 1/1. Functionally, catalyzes the reversible conversion of ribose-5-phosphate to ribulose 5-phosphate. The sequence is that of Ribose-5-phosphate isomerase A from Streptococcus pneumoniae (strain ATCC 700669 / Spain 23F-1).